Consider the following 283-residue polypeptide: Arsenite methyltransferase (283 aa).

The protein belongs to the methyltransferase superfamily. Arsenite methyltransferase family.

It catalyses the reaction arsenic triglutathione + [thioredoxin]-dithiol + S-adenosyl-L-methionine + 2 H2O = methylarsonous acid + [thioredoxin]-disulfide + 3 glutathione + S-adenosyl-L-homocysteine + H(+). The enzyme catalyses arsenic triglutathione + 2 [thioredoxin]-dithiol + 2 S-adenosyl-L-methionine + H2O = dimethylarsinous acid + 2 [thioredoxin]-disulfide + 3 glutathione + 2 S-adenosyl-L-homocysteine + 2 H(+). It carries out the reaction arsenic triglutathione + 3 [thioredoxin]-dithiol + 3 S-adenosyl-L-methionine = trimethylarsine + 3 [thioredoxin]-disulfide + 3 glutathione + 3 S-adenosyl-L-homocysteine + 3 H(+). Catalyzes the transfer of a methyl group from AdoMet to arsenite, producing methylated arsenicals. Involved in the conversion of As(III) to a number of di- and trimethylated species, with trimethylarsine as the end product. Reduces the arsenic toxicity in the cell and may contribute to the global arsenic cycling. The protein is Arsenite methyltransferase of Rhodopseudomonas palustris (strain ATCC BAA-98 / CGA009).